A 183-amino-acid chain; its full sequence is Adenine phosphoribosyltransferase (183 aa).

It belongs to the purine/pyrimidine phosphoribosyltransferase family. In terms of assembly, homodimer.

It localises to the cytoplasm. The enzyme catalyses AMP + diphosphate = 5-phospho-alpha-D-ribose 1-diphosphate + adenine. Its pathway is purine metabolism; AMP biosynthesis via salvage pathway; AMP from adenine: step 1/1. Functionally, catalyzes a salvage reaction resulting in the formation of AMP, that is energically less costly than de novo synthesis. In Escherichia coli (strain K12 / MC4100 / BW2952), this protein is Adenine phosphoribosyltransferase.